Here is a 1031-residue protein sequence, read N- to C-terminus: Beta-galactosidase (1031 aa).

Substrate contacts are provided by N100 and D198. D198 is a binding site for Na(+). Residues E412, H414, and E457 each coordinate Mg(2+). Residues E457 and 533-536 (EYAH) contribute to the substrate site. E457 acts as the Proton donor in catalysis. Residue E533 is the Nucleophile of the active site. A Mg(2+)-binding site is contributed by N593. 2 residues coordinate Na(+): F597 and N600. Substrate contacts are provided by N600 and W1005.

This sequence belongs to the glycosyl hydrolase 2 family. In terms of assembly, homotetramer. Mg(2+) is required as a cofactor. Na(+) serves as cofactor.

It carries out the reaction Hydrolysis of terminal non-reducing beta-D-galactose residues in beta-D-galactosides.. This Vibrio vulnificus (strain YJ016) protein is Beta-galactosidase.